The primary structure comprises 629 residues: DNA mismatch repair protein MutL (629 aa).

Belongs to the DNA mismatch repair MutL/HexB family.

Its function is as follows. This protein is involved in the repair of mismatches in DNA. It is required for dam-dependent methyl-directed DNA mismatch repair. May act as a 'molecular matchmaker', a protein that promotes the formation of a stable complex between two or more DNA-binding proteins in an ATP-dependent manner without itself being part of a final effector complex. This Haemophilus influenzae (strain 86-028NP) protein is DNA mismatch repair protein MutL.